The primary structure comprises 480 residues: MVERKRWSENFSEWFNEVIEEAGILDKRYPVKGMNVWLPYGLKIMKNIEKFIHEEMERTGHQEVLFPALIPETEFKKEAEHIAGFEGEVFWITHAGHEPLDVKLILRPTSETAMYSMFALWIRSHADLPFKVYQIVNVYRYETKHTRPLIRVREISRFFEAHTAHADFEDAERQIKEDLEIFDNLMKRLAIAYIISKRPEWDKFPGAFYSLGAEVVMPDGRTLQIGTMHNYKQNFAKAYNILYEKEDGTHDYVHQTTFGMSERLLAAVIAIHGDDRGMVLPPTIAPIQVVIVPIPKKEKQEIVYEYAREIEEELRTAGIRVHLDMREKRPGWKFYDWELKGVPVRIEVGPRDVENSTVVLARRDKLEKITIKREELVDKVRELFDDIMKYLYERANEWLNSHIKRVETLEEAKKAFEDRRGIVEIPWCGEESCGLKMEEELDAKMLGIPYPEEKAKAPEGSRCPVCGRDAKFIARFARTY.

Belongs to the class-II aminoacyl-tRNA synthetase family. ProS type 3 subfamily. As to quaternary structure, homodimer.

The protein localises to the cytoplasm. It catalyses the reaction tRNA(Pro) + L-proline + ATP = L-prolyl-tRNA(Pro) + AMP + diphosphate. Catalyzes the attachment of proline to tRNA(Pro) in a two-step reaction: proline is first activated by ATP to form Pro-AMP and then transferred to the acceptor end of tRNA(Pro). The protein is Proline--tRNA ligase of Pyrococcus abyssi (strain GE5 / Orsay).